Reading from the N-terminus, the 114-residue chain is Iron-sulfur cluster insertion protein ErpA (114 aa).

The iron-sulfur cluster site is built by Cys42, Cys106, and Cys108.

The protein belongs to the HesB/IscA family. In terms of assembly, homodimer. Requires iron-sulfur cluster as cofactor.

In terms of biological role, required for insertion of 4Fe-4S clusters for at least IspG. In Shigella boydii serotype 18 (strain CDC 3083-94 / BS512), this protein is Iron-sulfur cluster insertion protein ErpA.